The chain runs to 209 residues: rRNA N(6)-adenosine-methyltransferase METTL5 (209 aa).

S-adenosyl-L-methionine is bound by residues glutamine 28, threonine 31, glycine 59, cysteine 62, valine 64, aspartate 81, and 108–109 (DV).

This sequence belongs to the methyltransferase superfamily. PrmA family. Heterodimer; heterodimerizes with TRMT112. In terms of tissue distribution, expressed from very early development (8 post-conceptual weeks) and expression persists through adulthood in multiple substructures of the brain, including the cerebellar cortex, hippocampus, and striatum.

It is found in the nucleus. Its subcellular location is the presynapse. The protein resides in the postsynapse. The enzyme catalyses adenosine(1832) in 18S rRNA + S-adenosyl-L-methionine = N(6)-methyladenosine(1832) in 18S rRNA + S-adenosyl-L-homocysteine + H(+). RRNA N6-adenosine-methyltransferase activity is inhibited by zinc. Catalytic subunit of a heterodimer with TRMT112, which specifically methylates the 6th position of adenine in position 1832 of 18S rRNA. N6-methylation of adenine(1832) in 18S rRNA resides in the decoding center of 18S rRNA and is required for translation and embryonic stem cells (ESCs) pluripotency and differentiation. In Homo sapiens (Human), this protein is rRNA N(6)-adenosine-methyltransferase METTL5.